The primary structure comprises 101 residues: Ubiquitin-related modifier 1 (101 aa).

Gly-101 is modified (1-thioglycine). A Glycyl lysine isopeptide (Gly-Lys) (interchain with K-? in acceptor proteins) cross-link involves residue Gly-101.

The protein belongs to the URM1 family. Post-translationally, C-terminal thiocarboxylation occurs in 2 steps, it is first acyl-adenylated (-COAMP) via the hesA/moeB/thiF part of UBA4, then thiocarboxylated (-COSH) via the rhodanese domain of UBA4.

The protein resides in the cytoplasm. Its pathway is tRNA modification; 5-methoxycarbonylmethyl-2-thiouridine-tRNA biosynthesis. In terms of biological role, acts as a sulfur carrier required for 2-thiolation of mcm(5)S(2)U at tRNA wobble positions of cytosolic tRNA(Lys), tRNA(Glu) and tRNA(Gln). Serves as sulfur donor in tRNA 2-thiolation reaction by being thiocarboxylated (-COSH) at its C-terminus by the MOCS3 homolog UBA4. The sulfur is then transferred to tRNA to form 2-thiolation of mcm(5)S(2)U. Prior mcm(5) tRNA modification by the elongator complex is required for 2-thiolation. Also acts as a ubiquitin-like protein (UBL) that is covalently conjugated via an isopeptide bond to lysine residues of target proteins such as AHP1. The thiocarboxylated form serves as substrate for conjugation and oxidative stress specifically induces the formation of UBL-protein conjugates. The chain is Ubiquitin-related modifier 1 from Scheffersomyces stipitis (strain ATCC 58785 / CBS 6054 / NBRC 10063 / NRRL Y-11545) (Yeast).